The sequence spans 201 residues: Holliday junction branch migration complex subunit RuvA (201 aa).

Residues 1–63 (MYAYIKGKLS…EDAQLLYGFM (63 aa)) form a domain I region. Residues 64–142 (SEEEKGMFLS…ITEENPETLL (79 aa)) form a domain II region. Residues 143 to 153 (NFEGSESNQTS) form a flexible linker region. Residues 153 to 201 (SPILDEALLALEALGYSKRELNKVEKKLQAESYTSVDEAVKAGLKILVS) form a domain III region.

It belongs to the RuvA family. As to quaternary structure, homotetramer. Forms an RuvA(8)-RuvB(12)-Holliday junction (HJ) complex. HJ DNA is sandwiched between 2 RuvA tetramers; dsDNA enters through RuvA and exits via RuvB. An RuvB hexamer assembles on each DNA strand where it exits the tetramer. Each RuvB hexamer is contacted by two RuvA subunits (via domain III) on 2 adjacent RuvB subunits; this complex drives branch migration. In the full resolvosome a probable DNA-RuvA(4)-RuvB(12)-RuvC(2) complex forms which resolves the HJ.

The protein resides in the cytoplasm. Functionally, the RuvA-RuvB-RuvC complex processes Holliday junction (HJ) DNA during genetic recombination and DNA repair, while the RuvA-RuvB complex plays an important role in the rescue of blocked DNA replication forks via replication fork reversal (RFR). RuvA specifically binds to HJ cruciform DNA, conferring on it an open structure. The RuvB hexamer acts as an ATP-dependent pump, pulling dsDNA into and through the RuvAB complex. HJ branch migration allows RuvC to scan DNA until it finds its consensus sequence, where it cleaves and resolves the cruciform DNA. The protein is Holliday junction branch migration complex subunit RuvA of Staphylococcus carnosus (strain TM300).